The following is a 514-amino-acid chain: Probable drug/proton antiporter YHK8 (514 aa).

The Cytoplasmic segment spans residues 1–74 (MVAEFQIASA…RHMSTARRYY (74 aa)). A helical membrane pass occupies residues 75–95 (ISSLITFTSMVITMISSSWTL). Topologically, residues 96–111 (PSTHIIEHFHISHEVS) are extracellular. A helical transmembrane segment spans residues 112-132 (TLGITLYVFGLGIGPLFLSPL). Residues 133-141 (SELYGRRIT) are Cytoplasmic-facing. A helical transmembrane segment spans residues 142-162 (FLYALTLSIIWQCLTIWSKTI). Residues 163 to 170 (TGVMFGRF) lie on the Extracellular side of the membrane. A helical transmembrane segment spans residues 171–191 (LSGFFGSAFLSVAGGAIADIF). Residues 192 to 200 (DKDQIGIPM) are Cytoplasmic-facing. The chain crosses the membrane as a helical span at residues 201 to 221 (AIYTTSAFLGPSLGPIIGGAL). The Extracellular portion of the chain corresponds to 222–227 (YHQSYK). Residues 228–248 (WTFITLLITSGCCLVMIIFTI) traverse the membrane as a helical segment. Topologically, residues 249–307 (PETYKPMLLIRKAKRLRKEKNDQRYYAVLEVTREQTSLLSAIFLSTKRPFGLLLRDRMM) are cytoplasmic. The helical transmembrane segment at 308-328 (GVLCFYTGLELAIIYLYFVAF) threads the bilayer. Topologically, residues 329–342 (PYVFKKLYNFGPME) are extracellular. A helical membrane pass occupies residues 343–363 (IACSYIGIMVGMILSAPTCLL). The Cytoplasmic segment spans residues 364–386 (FQKTFEWRVKRNNGVKTPEMRFE). The chain crosses the membrane as a helical span at residues 387–407 (PLFYGAFLTPVGLFIFAFTCY). Topologically, residues 408-412 (KHVHW) are extracellular. Residues 413–433 (IAPIIGSAIFGSGVYFVFTGV) traverse the membrane as a helical segment. The Cytoplasmic segment spans residues 434 to 447 (FAYTVDAYRRYAAS). A helical transmembrane segment spans residues 448-468 (GMACNTFVRCIMAGVFPLFGL). Topologically, residues 469–477 (QMYKSMGVN) are extracellular. The chain crosses the membrane as a helical span at residues 478–498 (WAGFLLAMVTVAMIPVPFLFT). Residues 499–514 (KYGARLRAKSPYAWDD) are Cytoplasmic-facing.

Belongs to the major facilitator superfamily. CAR1 family.

The protein localises to the membrane. Probable drug/proton antiporter. In Saccharomyces cerevisiae (strain ATCC 204508 / S288c) (Baker's yeast), this protein is Probable drug/proton antiporter YHK8 (YHK8).